We begin with the raw amino-acid sequence, 47 residues long: Trifunctional NAD biosynthesis/regulator protein NadR (47 aa).

One can recognise an HTH cro/C1-type domain in the interval 7–47; it reads LKSAIKQKGCTLDEVAEPSGMTKGYLSQLLNRKIKARARRS. The H-T-H motif DNA-binding region spans 18 to 37; sequence LDEVAEPSGMTKGYLSQLLN.

The protein resides in the cell membrane. The protein localises to the cytoplasm. The enzyme catalyses beta-nicotinamide D-ribonucleotide + ATP + H(+) = diphosphate + NAD(+). It carries out the reaction beta-nicotinamide D-riboside + ATP = beta-nicotinamide D-ribonucleotide + ADP + H(+). It functions in the pathway cofactor biosynthesis; NAD(+) biosynthesis [regulation]. It participates in cofactor biosynthesis; NAD(+) biosynthesis; NAD(+) from nicotinamide D-ribonucleotide: step 1/1. Functionally, this enzyme has three activities: DNA binding, nicotinamide mononucleotide (NMN) adenylyltransferase and ribosylnicotinamide (RN) kinase. The DNA-binding domain binds to the nadB operator sequence in an NAD- and ATP-dependent manner. As NAD levels increase within the cell, the affinity of NadR for the nadB operator regions of nadA, nadB, and pncB increases, repressing the transcription of these genes. The RN kinase activity catalyzes the phosphorylation of RN to form nicotinamide ribonucleotide. The NMN adenylyltransferase activity catalyzes the transfer of the AMP moiety of ATP to nicotinamide ribonucleotide to form NAD(+). The NMN adenylyltransferase domain also functions as the NAD and ATP sensor. This Klebsiella pneumoniae protein is Trifunctional NAD biosynthesis/regulator protein NadR (nadR).